Consider the following 216-residue polypeptide: Protein-L-isoaspartate O-methyltransferase (216 aa).

The active site involves serine 61.

This sequence belongs to the methyltransferase superfamily. L-isoaspartyl/D-aspartyl protein methyltransferase family.

It localises to the cytoplasm. The enzyme catalyses [protein]-L-isoaspartate + S-adenosyl-L-methionine = [protein]-L-isoaspartate alpha-methyl ester + S-adenosyl-L-homocysteine. In terms of biological role, catalyzes the methyl esterification of L-isoaspartyl residues in peptides and proteins that result from spontaneous decomposition of normal L-aspartyl and L-asparaginyl residues. It plays a role in the repair and/or degradation of damaged proteins. This Dinoroseobacter shibae (strain DSM 16493 / NCIMB 14021 / DFL 12) protein is Protein-L-isoaspartate O-methyltransferase.